A 426-amino-acid polypeptide reads, in one-letter code: Glucose-6-phosphate isomerase (426 aa).

Glu-282 acts as the Proton donor in catalysis. Residues His-303 and Lys-417 contribute to the active site.

The protein belongs to the GPI family.

It is found in the cytoplasm. The enzyme catalyses alpha-D-glucose 6-phosphate = beta-D-fructose 6-phosphate. It functions in the pathway carbohydrate biosynthesis; gluconeogenesis. It participates in carbohydrate degradation; glycolysis; D-glyceraldehyde 3-phosphate and glycerone phosphate from D-glucose: step 2/4. In terms of biological role, catalyzes the reversible isomerization of glucose-6-phosphate to fructose-6-phosphate. The chain is Glucose-6-phosphate isomerase from Onion yellows phytoplasma (strain OY-M).